The following is a 940-amino-acid chain: Leucine--tRNA ligase, mitochondrial (940 aa).

The 'HIGH' region signature appears at 54–64 (PYPSGALHMGH). Residues 638–642 (TINKL) carry the 'KMSKS' region motif. Residue K641 participates in ATP binding. The interval 724 to 744 (KEQHQHQQQQHQQPLPSSEFN) is disordered.

This sequence belongs to the class-I aminoacyl-tRNA synthetase family.

It localises to the mitochondrion. The catalysed reaction is tRNA(Leu) + L-leucine + ATP = L-leucyl-tRNA(Leu) + AMP + diphosphate. The protein is Leucine--tRNA ligase, mitochondrial (mleuS) of Dictyostelium discoideum (Social amoeba).